Reading from the N-terminus, the 419-residue chain is UDP-N-acetylglucosamine 1-carboxyvinyltransferase (419 aa).

22–23 (KN) lines the phosphoenolpyruvate pocket. UDP-N-acetyl-alpha-D-glucosamine is bound at residue Arg-95. Cys-119 acts as the Proton donor in catalysis. The residue at position 119 (Cys-119) is a 2-(S-cysteinyl)pyruvic acid O-phosphothioketal. UDP-N-acetyl-alpha-D-glucosamine contacts are provided by residues 164-167 (KVSV), Asp-308, and Ile-330.

The protein belongs to the EPSP synthase family. MurA subfamily.

The protein localises to the cytoplasm. The enzyme catalyses phosphoenolpyruvate + UDP-N-acetyl-alpha-D-glucosamine = UDP-N-acetyl-3-O-(1-carboxyvinyl)-alpha-D-glucosamine + phosphate. It functions in the pathway cell wall biogenesis; peptidoglycan biosynthesis. Cell wall formation. Adds enolpyruvyl to UDP-N-acetylglucosamine. The chain is UDP-N-acetylglucosamine 1-carboxyvinyltransferase from Rickettsia canadensis (strain McKiel).